The primary structure comprises 354 residues: Serum paraoxonase/arylesterase 2 (354 aa).

A disulfide bridge connects residues Cys42 and Cys352. Glu53 and Asp54 together coordinate Ca(2+). The active-site Proton acceptor is His114. Residues Ile116, Asn167, Asp168, and Asn223 each contribute to the Ca(2+) site. An N-linked (GlcNAc...) asparagine glycan is attached at Asn254. Residues Asp268 and Asn269 each contribute to the Ca(2+) site. N-linked (GlcNAc...) asparagine glycans are attached at residues Asn269 and Asn323.

The protein belongs to the paraoxonase family. Homotrimer. Ca(2+) is required as a cofactor. In terms of processing, glycosylated. Post-translationally, the signal sequence is not cleaved.

It is found in the membrane. It carries out the reaction a phenyl acetate + H2O = a phenol + acetate + H(+). It catalyses the reaction an N-acyl-L-homoserine lactone + H2O = an N-acyl-L-homoserine + H(+). Its function is as follows. Capable of hydrolyzing lactones and a number of aromatic carboxylic acid esters. This is Serum paraoxonase/arylesterase 2 (Pon2) from Rattus norvegicus (Rat).